An 80-amino-acid polypeptide reads, in one-letter code: Raniseptin-6 (80 aa).

A signal peptide spans 1-22 (MAFLKKSLFLVLFLGIVSLSIC). The propeptide occupies 23-49 (EEEKREGEEEEKQEEENEELSEEELRE).

The protein belongs to the frog skin active peptide (FSAP) family. Dermaseptin subfamily. In terms of tissue distribution, expressed by the skin glands.

Its subcellular location is the secreted. Functionally, has antibacterial activity. The chain is Raniseptin-6 from Boana raniceps (Chaco tree frog).